Reading from the N-terminus, the 92-residue chain is Protein 10 (92 aa).

Residues 18 to 29 (FMQKYDKNSDQH) form the EF-hand domain.

Belongs to the calbindin family. In terms of tissue distribution, brain.

This is Protein 10 from Cavia porcellus (Guinea pig).